The primary structure comprises 599 residues: Proline--tRNA ligase (599 aa).

This sequence belongs to the class-II aminoacyl-tRNA synthetase family. ProS type 1 subfamily. As to quaternary structure, homodimer.

The protein resides in the cytoplasm. It carries out the reaction tRNA(Pro) + L-proline + ATP = L-prolyl-tRNA(Pro) + AMP + diphosphate. In terms of biological role, catalyzes the attachment of proline to tRNA(Pro) in a two-step reaction: proline is first activated by ATP to form Pro-AMP and then transferred to the acceptor end of tRNA(Pro). As ProRS can inadvertently accommodate and process non-cognate amino acids such as alanine and cysteine, to avoid such errors it has two additional distinct editing activities against alanine. One activity is designated as 'pretransfer' editing and involves the tRNA(Pro)-independent hydrolysis of activated Ala-AMP. The other activity is designated 'posttransfer' editing and involves deacylation of mischarged Ala-tRNA(Pro). The misacylated Cys-tRNA(Pro) is not edited by ProRS. In Prochlorococcus marinus (strain MIT 9313), this protein is Proline--tRNA ligase.